Reading from the N-terminus, the 556-residue chain is Guanine nucleotide-binding protein-like 3 homolog (556 aa).

Residues 29–50 are disordered; that stretch reads NRKVKKEAKKNGTTNKKEKTIS. A coiled-coil region spans residues 58–95; that stretch reads KEEILVQAEQEREKIKVRQEAAKEAAKIHRIEKRKNNL. One can recognise a CP-type G domain in the interval 138–317; the sequence is ASEVRKTVEI…LIDSPGVILV (180 aa). Residues 184-187, 266-273, and 310-313 contribute to the GTP site; these read NKID, GFPNVGKS, and DSPG. Disordered stretches follow at residues 461 to 508 and 525 to 556; these read APHN…PESL and KKQK…AMEM. The segment covering 466-478 has biased composition (acidic residues); the sequence is DEEEDDDDEMETD. The span at 525–535 shows a compositional bias: basic residues; that stretch reads KKQKKKSKKTA.

The protein belongs to the TRAFAC class YlqF/YawG GTPase family.

The protein resides in the nucleus. Its function is as follows. May play a role in regulating cellular proliferation in both germline and somatic tissues. In Caenorhabditis elegans, this protein is Guanine nucleotide-binding protein-like 3 homolog.